The sequence spans 433 residues: tRNA-2-methylthio-N(6)-dimethylallyladenosine synthase (433 aa).

One can recognise an MTTase N-terminal domain in the interval 4–119; sequence KKLFIQTLGC…ITQAIKTPKF (116 aa). The [4Fe-4S] cluster site is built by C13, C50, C82, C151, C155, and C158. The Radical SAM core domain occupies 137-370; sequence RNSIYKSYIN…QNRHSEILDK (234 aa). In terms of domain architecture, TRAM spans 373 to 433; it reads KKQENKTFKV…KRMVLYGEIV (61 aa).

It belongs to the methylthiotransferase family. MiaB subfamily. As to quaternary structure, monomer. Requires [4Fe-4S] cluster as cofactor.

The protein resides in the cytoplasm. The catalysed reaction is N(6)-dimethylallyladenosine(37) in tRNA + (sulfur carrier)-SH + AH2 + 2 S-adenosyl-L-methionine = 2-methylsulfanyl-N(6)-dimethylallyladenosine(37) in tRNA + (sulfur carrier)-H + 5'-deoxyadenosine + L-methionine + A + S-adenosyl-L-homocysteine + 2 H(+). Its function is as follows. Catalyzes the methylthiolation of N6-(dimethylallyl)adenosine (i(6)A), leading to the formation of 2-methylthio-N6-(dimethylallyl)adenosine (ms(2)i(6)A) at position 37 in tRNAs that read codons beginning with uridine. The chain is tRNA-2-methylthio-N(6)-dimethylallyladenosine synthase from Campylobacter jejuni subsp. jejuni serotype O:2 (strain ATCC 700819 / NCTC 11168).